The sequence spans 513 residues: GMP synthase [glutamine-hydrolyzing] (513 aa).

Residues 3–200 enclose the Glutamine amidotransferase type-1 domain; sequence SVLVLDFGSQ…LITIAGITPD (198 aa). The Nucleophile role is filled by C80. Active-site residues include H174 and E176. Residues 201–388 form the GMPS ATP-PPase domain; the sequence is WSSKSFIEHQ…LGIAEDILMR (188 aa). Position 228–234 (228–234) interacts with ATP; that stretch reads SGGVDST.

In terms of assembly, homodimer.

It carries out the reaction XMP + L-glutamine + ATP + H2O = GMP + L-glutamate + AMP + diphosphate + 2 H(+). It functions in the pathway purine metabolism; GMP biosynthesis; GMP from XMP (L-Gln route): step 1/1. Its function is as follows. Catalyzes the synthesis of GMP from XMP. This chain is GMP synthase [glutamine-hydrolyzing], found in Pelodictyon phaeoclathratiforme (strain DSM 5477 / BU-1).